The chain runs to 186 residues: dCTP deaminase (186 aa).

DCTP is bound at residue 107–112 (KSTYAR). Residue E133 is the Proton donor/acceptor of the active site. DCTP is bound by residues Q152, Y166, and Q176.

It belongs to the dCTP deaminase family. Homotrimer.

The enzyme catalyses dCTP + H2O + H(+) = dUTP + NH4(+). It functions in the pathway pyrimidine metabolism; dUMP biosynthesis; dUMP from dCTP (dUTP route): step 1/2. Functionally, catalyzes the deamination of dCTP to dUTP. The protein is dCTP deaminase of Campylobacter jejuni subsp. jejuni serotype O:2 (strain ATCC 700819 / NCTC 11168).